The following is a 136-amino-acid chain: Gilles de la Tourette syndrome chromosomal region candidate gene 1 protein (136 aa).

The helical transmembrane segment at 73-93 (AICMEVFLFLWFIAPIYACVC) threads the bilayer.

It is found in the membrane. The protein is Gilles de la Tourette syndrome chromosomal region candidate gene 1 protein (GTSCR1) of Homo sapiens (Human).